The following is a 473-amino-acid chain: Serine carboxypeptidase-like 42 (473 aa).

The N-terminal stretch at 1-26 is a signal peptide; sequence MASVSWRAVAVAMVVVLLSLQWFAKG. 3 cysteine pairs are disulfide-bonded: Cys-87/Cys-346, Cys-247/Cys-264, and Cys-289/Cys-314. N-linked (GlcNAc...) asparagine glycosylation is present at Asn-138. Ser-179 is a catalytic residue. An N-linked (GlcNAc...) asparagine glycan is attached at Asn-259. Asn-335 and Asn-351 each carry an N-linked (GlcNAc...) asparagine glycan. Catalysis depends on residues Asp-383 and His-440. Asn-465 carries an N-linked (GlcNAc...) asparagine glycan.

The protein belongs to the peptidase S10 family. As to expression, expression not detected.

Its subcellular location is the secreted. Probable carboxypeptidase. This is Serine carboxypeptidase-like 42 (SCPL42) from Arabidopsis thaliana (Mouse-ear cress).